Here is a 71-residue protein sequence, read N- to C-terminus: Transcription modulator YdgT (71 aa).

This sequence belongs to the Hha/YmoA/Cnu family. As to quaternary structure, forms complexes with both H-NS and StpA.

Functionally, binds to H-NS and modified the range of genes it silences; H-NS alonge silences core gene while the H-NS-Hha complex (and presumably also H-NS-YdgT) silences genes acquired by horizontal gene transfer. Plays a role silencing virulence factors in the absence of factors that induce pathogenicity. The complex formed with H-NS binds to the specific 26-bp cnb site in the origin of replication oriC. This Salmonella choleraesuis (strain SC-B67) protein is Transcription modulator YdgT (ydgT).